The chain runs to 324 residues: Phospho-N-acetylmuramoyl-pentapeptide-transferase (324 aa).

10 consecutive transmembrane segments (helical) span residues Thr-9–Val-29, Met-54–Gly-74, Val-77–Leu-97, Phe-117–Ala-137, Ile-147–Ser-167, Leu-176–Phe-196, Met-201–Asn-221, Ile-227–Leu-247, Leu-253–Phe-273, and Val-304–Phe-324.

Belongs to the glycosyltransferase 4 family. MraY subfamily. The cofactor is Mg(2+).

Its subcellular location is the cell membrane. It carries out the reaction UDP-N-acetyl-alpha-D-muramoyl-L-alanyl-gamma-D-glutamyl-meso-2,6-diaminopimeloyl-D-alanyl-D-alanine + di-trans,octa-cis-undecaprenyl phosphate = di-trans,octa-cis-undecaprenyl diphospho-N-acetyl-alpha-D-muramoyl-L-alanyl-D-glutamyl-meso-2,6-diaminopimeloyl-D-alanyl-D-alanine + UMP. Its pathway is cell wall biogenesis; peptidoglycan biosynthesis. Functionally, catalyzes the initial step of the lipid cycle reactions in the biosynthesis of the cell wall peptidoglycan: transfers peptidoglycan precursor phospho-MurNAc-pentapeptide from UDP-MurNAc-pentapeptide onto the lipid carrier undecaprenyl phosphate, yielding undecaprenyl-pyrophosphoryl-MurNAc-pentapeptide, known as lipid I. In Listeria welshimeri serovar 6b (strain ATCC 35897 / DSM 20650 / CCUG 15529 / CIP 8149 / NCTC 11857 / SLCC 5334 / V8), this protein is Phospho-N-acetylmuramoyl-pentapeptide-transferase.